A 221-amino-acid polypeptide reads, in one-letter code: Oxaloacetate tautomerase oaa1, mitochondrial (221 aa).

Positions 59, 61, and 93 each coordinate Mg(2+).

The protein belongs to the FAH family. The cofactor is Mg(2+). It depends on Mn(2+) as a cofactor.

Its subcellular location is the mitochondrion. It localises to the cytoplasm. The enzyme catalyses oxaloacetate = enol-oxaloacetate. Functionally, tautomerase that converts enol-oxaloacetate, a strong inhibitor of succinate dehydrogenase, to the physiological keto form of oxaloacetate. The polypeptide is Oxaloacetate tautomerase oaa1, mitochondrial (Schizosaccharomyces pombe (strain 972 / ATCC 24843) (Fission yeast)).